Here is a 371-residue protein sequence, read N- to C-terminus: DNA repair protein RAD14 (371 aa).

The interval 26 to 48 (LSSDQLNRIESRNEPLKTRPLAV) is disordered. The span at 32–42 (NRIESRNEPLK) shows a compositional bias: basic and acidic residues. Zn(2+) is bound by residues Cys191, Cys194, Cys213, and Cys216. The segment at 191–216 (CIECHINIEMDPVLHDVFKLQVCKQC) is a zinc-finger region.

Belongs to the XPA family. As to quaternary structure, two monomers bind to kinked/damaged DNA (construct with only the C-terminal DNA-binding domain). Component of the nucleotide excision repair factor 1 (NEF1) complex consisting of RAD1, RAD10 and RAD14.

The protein localises to the nucleus. Functionally, involved in nucleotide excision repair. Binds specifically to damaged DNA. Required for the incision step. The chain is DNA repair protein RAD14 (RAD14) from Saccharomyces cerevisiae (strain ATCC 204508 / S288c) (Baker's yeast).